The chain runs to 1098 residues: WD repeat-containing protein 72 (1098 aa).

WD repeat units lie at residues 15 to 54 (APPH…KISA), 60 to 102 (GHSA…CVEK), 158 to 196 (WINC…NSIQ), 315 to 359 (ENKN…VSKF), 399 to 438 (AGTA…KARL), 456 to 501 (GHHQ…ILHK), 504 to 549 (LEAG…CLLR), and 552 to 591 (KHLF…LERH). 2 positions are modified to phosphoserine: S1077 and S1079.

The protein resides in the cytoplasmic vesicle. Functionally, plays a major role in formation of tooth enamel. Specifically required during the maturation phase of amelogenesis for normal formation of the enamel matrix and clearance of enamel proteins. May be involved in localization of the calcium transporter SLC24A4 to the ameloblast cell membrane. The chain is WD repeat-containing protein 72 (WDR72) from Pongo abelii (Sumatran orangutan).